A 623-amino-acid chain; its full sequence is MLKLLCLLLPLVAVSASPIDLGSQKDYLVLDLPGLSHLSETQRPTMHAGLLPLNLSFVADDDTEYFFWRFSKQDVDRADIVFWLNGGPGCSSMDGALMELGPFVINPKQEVEYNEGTWVEAADVVFVDQPGGTGFSSTTNYLTELTEVADGFVTFLARYFHLFPADVYKKFTLGGESYAGQYVPYILKAIMDDLKSDSGQLPKELYLKGALIGNGWIDPNEQSLSYLEFFIKKELIDIHGSYMPGLLQQQEKCQNLINHSSGEASESQISYSACEKILNDALRFTRDKKAPLDQQCINMYDYTLRDTYPSCGMSWPPYLPDVTAFLQKKSVLEALHLDSSASWSECSARVGSHLKNKISVPSVDILPDLLQEIPIILFNGDHDIICNCIGTERMIDKLEFNGDQGFTEGTEYIPWFYNEVNVGKVISERNLTYVRVYNSSHMVPFDNTPVSRGLLDIYFDNFEDVEYNNVSGIATPVYDVDKNITYIDSNDPRLQNGPKSSSTDDSAAHGNPFFYYVFELFVIVLLLCGLVYLYQYYSNSAPHSILADKHKKKSKNKSKNVRFLDDLESNLDLDNTDDKKDNSVMSKLLSSMGYQAQEPYKPLDKGANADLDIEMDSHGTSEK.

The signal sequence occupies residues 1-16 (MLKLLCLLLPLVAVSA). Topologically, residues 17 to 512 (SPIDLGSQKD…TDDSAAHGNP (496 aa)) are lumenal. Asparagine 54 carries an N-linked (GlcNAc...) asparagine glycan. Serine 177 is a catalytic residue. A glycan (N-linked (GlcNAc...) asparagine) is linked at asparagine 258. Aspartate 383 is a catalytic residue. N-linked (GlcNAc...) asparagine glycans are attached at residues asparagine 430 and asparagine 438. Histidine 441 is an active-site residue. N-linked (GlcNAc...) asparagine glycosylation is found at asparagine 469 and asparagine 483. The chain crosses the membrane as a helical span at residues 513 to 533 (FFYYVFELFVIVLLLCGLVYL). Residues 534–623 (YQYYSNSAPH…EMDSHGTSEK (90 aa)) are Cytoplasmic-facing. Residues 597–623 (QEPYKPLDKGANADLDIEMDSHGTSEK) are disordered.

It belongs to the peptidase S10 family.

The protein resides in the golgi apparatus. It localises to the trans-Golgi network membrane. It carries out the reaction Preferential release of a C-terminal arginine or lysine residue.. In terms of biological role, protease with a carboxypeptidase B-like function involved in the C-terminal processing of the lysine and arginine residues from protein precursors. Promotes cell fusion and is involved in the programmed cell death. This Komagataella phaffii (strain GS115 / ATCC 20864) (Yeast) protein is Pheromone-processing carboxypeptidase KEX1 (KEX1).